Reading from the N-terminus, the 90-residue chain is Small ribosomal subunit protein bS20 (90 aa).

A compositionally biased stretch (basic and acidic residues) spans 1 to 11 (MANIKSSEKDI). 2 disordered regions span residues 1–29 (MANI…SRLR) and 69–90 (SKNA…SAAA).

It belongs to the bacterial ribosomal protein bS20 family.

Binds directly to 16S ribosomal RNA. The protein is Small ribosomal subunit protein bS20 of Leptospira borgpetersenii serovar Hardjo-bovis (strain L550).